A 278-amino-acid chain; its full sequence is Sulfur carrier protein FdhD (278 aa).

Cys121 serves as the catalytic Cysteine persulfide intermediate. 260-265 (FCKPGR) is a Mo-bis(molybdopterin guanine dinucleotide) binding site.

Belongs to the FdhD family.

Its subcellular location is the cytoplasm. Required for formate dehydrogenase (FDH) activity. Acts as a sulfur carrier protein that transfers sulfur from IscS to the molybdenum cofactor prior to its insertion into FDH. The polypeptide is Sulfur carrier protein FdhD (Salmonella typhi).